Consider the following 312-residue polypeptide: Olfactory receptor 10P22 (312 aa).

The Extracellular segment spans residues 1 to 26 (MGDDNDTDITEFILLGFSGYGFLQGH). Residue N5 is glycosylated (N-linked (GlcNAc...) asparagine). The helical transmembrane segment at 27 to 47 (LFWGVLCIYVVTLLGNSLIVL) threads the bilayer. At 48–57 (LTLADSALHS) the chain is on the cytoplasmic side. A helical membrane pass occupies residues 58-78 (PMYFFLRHFSVVEILYTTTIV). Residues 79–89 (PRMLADLRSSC) are Extracellular-facing. A helical transmembrane segment spans residues 90-110 (PTIPLASCFTQLYFFALFGIA). Residues 111–143 (ECCLLTAMAYDRYAAICCPLHYTTLMSQGTYTG) lie on the Cytoplasmic side of the membrane. Residues 144–164 (LVGASYLAGVISGTTHSIFIF) form a helical membrane-spanning segment. The Extracellular segment spans residues 165–205 (TLPFRGAKTIHHFLCDILPVLRLATASTFWGEVGNLFVTIT). The chain crosses the membrane as a helical span at residues 206–226 (FIFVPFLLIVASYACILVTIL). Topologically, residues 227 to 236 (GVATSQGRQK) are cytoplasmic. The chain crosses the membrane as a helical span at residues 237-257 (LFSTCSSHLFVVILFFGTATV). Topologically, residues 258 to 271 (AYMRPQADSFGNTD) are extracellular. Residues 272–292 (QILTLVYTVVTPMCNPFVYSL) traverse the membrane as a helical segment. Over 293–312 (RNKEVTGAMRRLMKRYLWGP) the chain is Cytoplasmic.

Belongs to the G-protein coupled receptor 1 family.

The protein localises to the cell membrane. Functionally, odorant receptor. The chain is Olfactory receptor 10P22 from Mus musculus (Mouse).